The following is a 200-amino-acid chain: 3-isopropylmalate dehydratase small subunit (200 aa).

Belongs to the LeuD family. LeuD type 1 subfamily. In terms of assembly, heterodimer of LeuC and LeuD.

The enzyme catalyses (2R,3S)-3-isopropylmalate = (2S)-2-isopropylmalate. It functions in the pathway amino-acid biosynthesis; L-leucine biosynthesis; L-leucine from 3-methyl-2-oxobutanoate: step 2/4. Its function is as follows. Catalyzes the isomerization between 2-isopropylmalate and 3-isopropylmalate, via the formation of 2-isopropylmaleate. This chain is 3-isopropylmalate dehydratase small subunit, found in Proteus mirabilis (strain HI4320).